Here is a 158-residue protein sequence, read N- to C-terminus: 6,7-dimethyl-8-ribityllumazine synthase (158 aa).

5-amino-6-(D-ribitylamino)uracil contacts are provided by residues F23, 61-63 (SFE), and 85-87 (AVI). 90–91 (ET) is a binding site for (2S)-2-hydroxy-3-oxobutyl phosphate. H93 functions as the Proton donor in the catalytic mechanism. A 5-amino-6-(D-ribitylamino)uracil-binding site is contributed by F118. Residue R132 coordinates (2S)-2-hydroxy-3-oxobutyl phosphate.

The protein belongs to the DMRL synthase family.

It carries out the reaction (2S)-2-hydroxy-3-oxobutyl phosphate + 5-amino-6-(D-ribitylamino)uracil = 6,7-dimethyl-8-(1-D-ribityl)lumazine + phosphate + 2 H2O + H(+). The protein operates within cofactor biosynthesis; riboflavin biosynthesis; riboflavin from 2-hydroxy-3-oxobutyl phosphate and 5-amino-6-(D-ribitylamino)uracil: step 1/2. Its function is as follows. Catalyzes the formation of 6,7-dimethyl-8-ribityllumazine by condensation of 5-amino-6-(D-ribitylamino)uracil with 3,4-dihydroxy-2-butanone 4-phosphate. This is the penultimate step in the biosynthesis of riboflavin. The protein is 6,7-dimethyl-8-ribityllumazine synthase of Prochlorococcus marinus (strain MIT 9301).